We begin with the raw amino-acid sequence, 74 residues long: Exodeoxyribonuclease 7 small subunit (74 aa).

Belongs to the XseB family. As to quaternary structure, heterooligomer composed of large and small subunits.

It is found in the cytoplasm. The catalysed reaction is Exonucleolytic cleavage in either 5'- to 3'- or 3'- to 5'-direction to yield nucleoside 5'-phosphates.. In terms of biological role, bidirectionally degrades single-stranded DNA into large acid-insoluble oligonucleotides, which are then degraded further into small acid-soluble oligonucleotides. The protein is Exodeoxyribonuclease 7 small subunit of Neisseria gonorrhoeae (strain ATCC 700825 / FA 1090).